We begin with the raw amino-acid sequence, 364 residues long: Beta-parvin (364 aa).

Residues 1-57 (MSSAPRSPTPRPRRMKKDESFLGKLGGTLARKRRAREVSDLQEEGKNAINSPMSPAL) form a disordered region. S7 bears the Phosphoserine mark. Basic and acidic residues predominate over residues 36–46 (REVSDLQEEGK). A Phosphoserine modification is found at S54. Calponin-homology (CH) domains follow at residues 87–194 (KELV…MHFR) and 254–361 (SVVK…TKYK).

It belongs to the parvin family. As to quaternary structure, interacts with DYSF. Interacts with ILK, ARHGEF6, PXN (via LD motifs), ACTN2 and actin. Expressed predominantly in heart and skeletal muscle.

The protein localises to the cell junction. It is found in the focal adhesion. Its subcellular location is the cell membrane. It localises to the cytoplasm. The protein resides in the cytoskeleton. The protein localises to the cell projection. It is found in the lamellipodium. Its subcellular location is the myofibril. It localises to the sarcomere. The protein resides in the z line. In terms of biological role, adapter protein that plays a role in integrin signaling via ILK and in activation of the GTPases CDC42 and RAC1 by guanine exchange factors, such as ARHGEF6. Is involved in the reorganization of the actin cytoskeleton and formation of lamellipodia. Plays a role in cell adhesion, cell spreading, establishment or maintenance of cell polarity, and cell migration. This chain is Beta-parvin (PARVB), found in Homo sapiens (Human).